A 453-amino-acid polypeptide reads, in one-letter code: Cytochrome b-c1 complex subunit 2, mitochondrial (453 aa).

A mitochondrion-targeting transit peptide spans 1-14; it reads MKLLTRAGSLSRFY. Residues lysine 66, lysine 199, and lysine 250 each carry the N6-acetyllysine modification.

This sequence belongs to the peptidase M16 family. UQCRC2/QCR2 subfamily. As to quaternary structure, component of the ubiquinol-cytochrome c oxidoreductase (cytochrome b-c1 complex, complex III, CIII), a multisubunit enzyme composed of 11 subunits. The complex is composed of 3 respiratory subunits cytochrome b, cytochrome c1 and Rieske protein UQCRFS1, 2 core protein subunits UQCRC1/QCR1 and UQCRC2/QCR2, and 6 low-molecular weight protein subunits UQCRH/QCR6, UQCRB/QCR7, UQCRQ/QCR8, UQCR10/QCR9, UQCR11/QCR10 and subunit 9, the cleavage product of Rieske protein UQCRFS1. The complex exists as an obligatory dimer and forms supercomplexes (SCs) in the inner mitochondrial membrane with NADH-ubiquinone oxidoreductase (complex I, CI) and cytochrome c oxidase (complex IV, CIV), resulting in different assemblies (supercomplex SCI(1)III(2)IV(1) and megacomplex MCI(2)III(2)IV(2)). Interacts with RAB5IF. Interacts with STMP1.

The protein resides in the mitochondrion inner membrane. Its function is as follows. Component of the ubiquinol-cytochrome c oxidoreductase, a multisubunit transmembrane complex that is part of the mitochondrial electron transport chain which drives oxidative phosphorylation. The respiratory chain contains 3 multisubunit complexes succinate dehydrogenase (complex II, CII), ubiquinol-cytochrome c oxidoreductase (cytochrome b-c1 complex, complex III, CIII) and cytochrome c oxidase (complex IV, CIV), that cooperate to transfer electrons derived from NADH and succinate to molecular oxygen, creating an electrochemical gradient over the inner membrane that drives transmembrane transport and the ATP synthase. The cytochrome b-c1 complex catalyzes electron transfer from ubiquinol to cytochrome c, linking this redox reaction to translocation of protons across the mitochondrial inner membrane, with protons being carried across the membrane as hydrogens on the quinol. In the process called Q cycle, 2 protons are consumed from the matrix, 4 protons are released into the intermembrane space and 2 electrons are passed to cytochrome c. The 2 core subunits UQCRC1/QCR1 and UQCRC2/QCR2 are homologous to the 2 mitochondrial-processing peptidase (MPP) subunits beta-MPP and alpha-MPP respectively, and they seem to have preserved their MPP processing properties. May be involved in the in situ processing of UQCRFS1 into the mature Rieske protein and its mitochondrial targeting sequence (MTS)/subunit 9 when incorporated into complex III. This is Cytochrome b-c1 complex subunit 2, mitochondrial (UQCRC2) from Bos taurus (Bovine).